A 50-amino-acid chain; its full sequence is U23-theraphotoxin-Cg1a 2 (50 aa).

Cystine bridges form between cysteine 22–cysteine 36, cysteine 29–cysteine 41, and cysteine 35–cysteine 47.

It belongs to the neurotoxin 10 (Hwtx-1) family. 64 (Jztx-20) subfamily. As to expression, expressed by the venom gland.

The protein localises to the secreted. Its function is as follows. Probable ion channel inhibitor. The chain is U23-theraphotoxin-Cg1a 2 from Chilobrachys guangxiensis (Chinese earth tiger tarantula).